Consider the following 381-residue polypeptide: Heterogeneous nuclear rnp K-like protein 2 (381 aa).

The segment at Met-1–Pro-34 is disordered. A compositionally biased stretch (low complexity) spans Thr-15–Ala-33. KH domains are found at residues Thr-43–Ile-107, Ile-156–Ile-221, and Asn-258–Leu-326. Residues Leu-344–Ser-381 are disordered. 3 positions are modified to phosphoserine: Ser-358, Ser-360, and Ser-362. The span at Pro-370–Ser-381 shows a compositional bias: basic and acidic residues.

Belongs to the HEK2 family. In terms of assembly, binds RNA. Post-translationally, phosphorylated by the plasma membrane-Anchored casein kinase YCK1. Phosphorylation at its C-terminus reduces its RNA-binding capacity.

The protein localises to the cytoplasm. It is found in the P-body. Its subcellular location is the nucleus. It localises to the chromosome. The protein resides in the telomere. RNA-binding protein involved in the correct localization of transcripts in the cell. RNA localization is a widespread mechanism for achieving localized protein synthesis. Required for the asymmetric localization to the daughter cell nucleus of the ASH1 transcript, coding for a specific repressor of transcription. Overexpression inhibits translation of the ASH1 transcript. Involved in the stability of transcripts, like the MTL1 mRNA. Involved in structural and functional organization of telomeric chromatin and regulates silencing at the HMR locus. This is Heterogeneous nuclear rnp K-like protein 2 (HEK2) from Saccharomyces cerevisiae (strain YJM789) (Baker's yeast).